The primary structure comprises 345 residues: Probable fructokinase-3 (345 aa).

The protein belongs to the carbohydrate kinase PfkB family.

It catalyses the reaction D-fructose + ATP = D-fructose 6-phosphate + ADP + H(+). Its pathway is glycan biosynthesis; starch biosynthesis. In terms of biological role, may play an important role in maintaining the flux of carbon towards starch formation. The protein is Probable fructokinase-3 of Arabidopsis thaliana (Mouse-ear cress).